A 213-amino-acid chain; its full sequence is Calcineurin B-like protein 8 (213 aa).

The N-myristoyl glycine moiety is linked to residue Gly-2. EF-hand domains are found at residues 31 to 66 (EVEA…RNSN), 67 to 102 (KKNL…FHPE), 104 to 139 (PLGD…LLNE), and 148 to 183 (AVEQ…NPAL). 5 residues coordinate Ca(2+): Asp-161, Asn-163, Asp-165, Lys-167, and Glu-172.

It belongs to the calcineurin regulatory subunit family. In terms of assembly, homodimer. As to expression, expressed at low levels in roots, shoots, culms, leaves and young spikelets.

Its subcellular location is the cell membrane. Functionally, acts as a calcium sensor. May function as positive regulator of salt stress responses. CBL proteins interact with CIPK serine-threonine protein kinases. Binding of a CBL protein to the regulatory NAF domain of a CIPK protein lead to the activation of the kinase in a calcium-dependent manner. This chain is Calcineurin B-like protein 8 (CBL8), found in Oryza sativa subsp. japonica (Rice).